Consider the following 117-residue polypeptide: Large ribosomal subunit protein bL20 (117 aa).

It belongs to the bacterial ribosomal protein bL20 family.

Binds directly to 23S ribosomal RNA and is necessary for the in vitro assembly process of the 50S ribosomal subunit. It is not involved in the protein synthesizing functions of that subunit. In Marinobacter nauticus (strain ATCC 700491 / DSM 11845 / VT8) (Marinobacter aquaeolei), this protein is Large ribosomal subunit protein bL20.